Here is a 472-residue protein sequence, read N- to C-terminus: Aspartyl/glutamyl-tRNA(Asn/Gln) amidotransferase subunit B (472 aa).

This sequence belongs to the GatB/GatE family. GatB subfamily. As to quaternary structure, heterotrimer of A, B and C subunits.

It carries out the reaction L-glutamyl-tRNA(Gln) + L-glutamine + ATP + H2O = L-glutaminyl-tRNA(Gln) + L-glutamate + ADP + phosphate + H(+). The catalysed reaction is L-aspartyl-tRNA(Asn) + L-glutamine + ATP + H2O = L-asparaginyl-tRNA(Asn) + L-glutamate + ADP + phosphate + 2 H(+). In terms of biological role, allows the formation of correctly charged Asn-tRNA(Asn) or Gln-tRNA(Gln) through the transamidation of misacylated Asp-tRNA(Asn) or Glu-tRNA(Gln) in organisms which lack either or both of asparaginyl-tRNA or glutaminyl-tRNA synthetases. The reaction takes place in the presence of glutamine and ATP through an activated phospho-Asp-tRNA(Asn) or phospho-Glu-tRNA(Gln). The protein is Aspartyl/glutamyl-tRNA(Asn/Gln) amidotransferase subunit B of Mycoplasmopsis agalactiae (strain NCTC 10123 / CIP 59.7 / PG2) (Mycoplasma agalactiae).